Here is a 356-residue protein sequence, read N- to C-terminus: Glutamine synthetase N-1 (356 aa).

The 81-residue stretch at 19-99 folds into the GS beta-grasp domain; that stretch reads VIAEYIWVGG…VMCDAYTPAG (81 aa). A GS catalytic domain is found at 106–356; it reads KRHNAAKIFS…IAETTLLWKP (251 aa).

It belongs to the glutamine synthetase family. Homooctamer. As to expression, this is a nodule isozyme.

It is found in the cytoplasm. It carries out the reaction L-glutamate + NH4(+) + ATP = L-glutamine + ADP + phosphate + H(+). This Phaseolus vulgaris (Kidney bean) protein is Glutamine synthetase N-1 (Gln-gamma).